The following is a 342-amino-acid chain: UDP-N-acetylglucosamine--N-acetylmuramyl-(pentapeptide) pyrophosphoryl-undecaprenol N-acetylglucosamine transferase (342 aa).

UDP-N-acetyl-alpha-D-glucosamine-binding positions include 10–12 (TGG), asparagine 124, serine 177, and glutamine 275.

Belongs to the glycosyltransferase 28 family. MurG subfamily.

The protein resides in the cell inner membrane. The catalysed reaction is di-trans,octa-cis-undecaprenyl diphospho-N-acetyl-alpha-D-muramoyl-L-alanyl-D-glutamyl-meso-2,6-diaminopimeloyl-D-alanyl-D-alanine + UDP-N-acetyl-alpha-D-glucosamine = di-trans,octa-cis-undecaprenyl diphospho-[N-acetyl-alpha-D-glucosaminyl-(1-&gt;4)]-N-acetyl-alpha-D-muramoyl-L-alanyl-D-glutamyl-meso-2,6-diaminopimeloyl-D-alanyl-D-alanine + UDP + H(+). The protein operates within cell wall biogenesis; peptidoglycan biosynthesis. Functionally, cell wall formation. Catalyzes the transfer of a GlcNAc subunit on undecaprenyl-pyrophosphoryl-MurNAc-pentapeptide (lipid intermediate I) to form undecaprenyl-pyrophosphoryl-MurNAc-(pentapeptide)GlcNAc (lipid intermediate II). The polypeptide is UDP-N-acetylglucosamine--N-acetylmuramyl-(pentapeptide) pyrophosphoryl-undecaprenol N-acetylglucosamine transferase (Campylobacter jejuni subsp. jejuni serotype O:6 (strain 81116 / NCTC 11828)).